The chain runs to 154 residues: Protein X (154 aa).

The tract at residues 68–117 (PCALRFTSARCMETTVNAPRNLPTVLHKRTLGLSAMSTTKIETYFKDCVF) is mitochondrial targeting sequence.

The protein belongs to the orthohepadnavirus protein X family. In terms of assembly, may form homodimer. May interact with host CEBPA, CFLAR, CREB1, DDB1, E4F1, HBXIP, HSPD1/HSP60, NFKBIA, POLR2E and SMAD4. Interacts with host SMC5-SMC6 complex and induces its degradation. Interacts with host TRPC4AP; leading to prevent ubiquitination of TRPC4AP. Interacts with host PLSCR1; this interaction promotes ubiquitination and degradation of HBx and impairs HBx-mediated cell proliferation. In terms of processing, a fraction may be phosphorylated in insect cells and HepG2 cells, a human hepatoblastoma cell line. Phosphorylated in vitro by host protein kinase C or mitogen-activated protein kinase. N-acetylated in insect cells.

The protein resides in the host cytoplasm. The protein localises to the host nucleus. It is found in the host mitochondrion. Functionally, multifunctional protein that plays a role in silencing host antiviral defenses and promoting viral transcription. Does not seem to be essential for HBV infection. May be directly involved in development of cirrhosis and liver cancer (hepatocellular carcinoma). Most of cytosolic activities involve modulation of cytosolic calcium. The effect on apoptosis is controversial depending on the cell types in which the studies have been conducted. May induce apoptosis by localizing in mitochondria and causing loss of mitochondrial membrane potential. May also modulate apoptosis by binding host CFLAR, a key regulator of the death-inducing signaling complex (DISC). Promotes viral transcription by using the host E3 ubiquitin ligase DDB1 to target the SMC5-SMC6 complex to proteasomal degradation. This host complex would otherwise bind to viral episomal DNA, and prevents its transcription. Moderately stimulates transcription of many different viral and cellular transcription elements. Promoters and enhancers stimulated by HBx contain DNA binding sites for NF-kappa-B, AP-1, AP-2, c-EBP, ATF/CREB, or the calcium-activated factor NF-AT. The protein is Protein X of Gorilla gorilla (western gorilla).